A 654-amino-acid chain; its full sequence is Glycogen debranching enzyme (654 aa).

Residue Asp-336 is the Nucleophile of the active site. The active-site Proton donor is Glu-371. A disordered region spans residues 459–484; that stretch reads EANGEENRDGTNSNYSDNHGKEGLGG.

The protein belongs to the glycosyl hydrolase 13 family.

The enzyme catalyses Hydrolysis of (1-&gt;6)-alpha-D-glucosidic linkages to branches with degrees of polymerization of three or four glucose residues in limit dextrin.. The protein operates within glycan degradation; glycogen degradation. In terms of biological role, removes maltotriose and maltotetraose chains that are attached by 1,6-alpha-linkage to the limit dextrin main chain, generating a debranched limit dextrin. The chain is Glycogen debranching enzyme from Salmonella typhi.